Reading from the N-terminus, the 527-residue chain is Type II methyltransferase M.XamI (527 aa).

It belongs to the N(4)/N(6)-methyltransferase family.

The enzyme catalyses a 2'-deoxyadenosine in DNA + S-adenosyl-L-methionine = an N(6)-methyl-2'-deoxyadenosine in DNA + S-adenosyl-L-homocysteine + H(+). Its function is as follows. A gamma subtype methylase that recognizes the double-stranded sequence 5'-GTCGAC-3', possibly methylates A-5 on both strands, and protects the DNA from cleavage by the XamI endonuclease. The sequence is that of Type II methyltransferase M.XamI from Xanthomonas campestris pv. amaranthicola.